The following is a 457-amino-acid chain: MALWGGRFTQAADQRFKQFNDSLRFDYRLAEQDIVGSVAWSKALVTVGVLTADEQRQLEDALNVLLEEVRANPQQILQSDAEDIHSWVEGKLIDKVGQLGKKLHTGRSRNDQVATDLKLWCKETVRELLTANRQLQSALVETAQANQDAVMPGYTHLQRAQPVTFAHWCLAYVEMLARDESRLQDTLKRLDVSPLGCGALAGTAYEIDREQLAGWLGFTSATRNSLDSVSDRDHVLELLSDAAIGMVHLSRFAEDLIFFNSGEAGFVELSDRVTSGSSLMPQKKNPDALELIRGKCGRVQGALTGMMMTLKGLPLAYNKDMQEDKEGVFDALDTWLDCLHMAALVLDGIQVKRSRCQDAAQQGYANATELADYLVAKGVPFREAHHIVGEAVVEAIRQGKPLEALSLADLQKFSLVISEDVYPILSLQSCLDKRAAKGGVSPQQVAQAIDYAKARLA.

Belongs to the lyase 1 family. Argininosuccinate lyase subfamily.

It localises to the cytoplasm. It catalyses the reaction 2-(N(omega)-L-arginino)succinate = fumarate + L-arginine. It participates in amino-acid biosynthesis; L-arginine biosynthesis; L-arginine from L-ornithine and carbamoyl phosphate: step 3/3. The sequence is that of Argininosuccinate lyase from Salmonella arizonae (strain ATCC BAA-731 / CDC346-86 / RSK2980).